Here is a 601-residue protein sequence, read N- to C-terminus: 4-hydroxy-3-methylbut-2-en-1-yl diphosphate synthase (flavodoxin) (601 aa).

Residues Cys-507, Cys-510, Cys-542, and Glu-549 each coordinate [4Fe-4S] cluster.

The protein belongs to the IspG family. Requires [4Fe-4S] cluster as cofactor.

The catalysed reaction is (2E)-4-hydroxy-3-methylbut-2-enyl diphosphate + oxidized [flavodoxin] + H2O + 2 H(+) = 2-C-methyl-D-erythritol 2,4-cyclic diphosphate + reduced [flavodoxin]. It functions in the pathway isoprenoid biosynthesis; isopentenyl diphosphate biosynthesis via DXP pathway; isopentenyl diphosphate from 1-deoxy-D-xylulose 5-phosphate: step 5/6. Functionally, converts 2C-methyl-D-erythritol 2,4-cyclodiphosphate (ME-2,4cPP) into 1-hydroxy-2-methyl-2-(E)-butenyl 4-diphosphate. The sequence is that of 4-hydroxy-3-methylbut-2-en-1-yl diphosphate synthase (flavodoxin) from Chlamydia muridarum (strain MoPn / Nigg).